A 216-amino-acid polypeptide reads, in one-letter code: Octanoyltransferase (216 aa).

The 175-residue stretch at 31-205 folds into the BPL/LPL catalytic domain; sequence STTRDEVWLV…ELVTLLDYEQ (175 aa). Substrate is bound by residues 70 to 77, 137 to 139, and 150 to 152; these read RGGQVTYH, SLG, and GLA. The Acyl-thioester intermediate role is filled by Cys-168.

It belongs to the LipB family.

The protein resides in the cytoplasm. It catalyses the reaction octanoyl-[ACP] + L-lysyl-[protein] = N(6)-octanoyl-L-lysyl-[protein] + holo-[ACP] + H(+). It functions in the pathway protein modification; protein lipoylation via endogenous pathway; protein N(6)-(lipoyl)lysine from octanoyl-[acyl-carrier-protein]: step 1/2. Functionally, catalyzes the transfer of endogenously produced octanoic acid from octanoyl-acyl-carrier-protein onto the lipoyl domains of lipoate-dependent enzymes. Lipoyl-ACP can also act as a substrate although octanoyl-ACP is likely to be the physiological substrate. This is Octanoyltransferase from Vibrio cholerae serotype O1 (strain ATCC 39315 / El Tor Inaba N16961).